The sequence spans 155 residues: Ribosome maturation factor RimP (155 aa).

Belongs to the RimP family.

The protein localises to the cytoplasm. Its function is as follows. Required for maturation of 30S ribosomal subunits. The chain is Ribosome maturation factor RimP from Prochlorococcus marinus (strain AS9601).